The chain runs to 310 residues: Methionyl-tRNA formyltransferase (310 aa).

Position 111–114 (111–114) interacts with (6S)-5,6,7,8-tetrahydrofolate; that stretch reads SLLP.

It belongs to the Fmt family.

The catalysed reaction is L-methionyl-tRNA(fMet) + (6R)-10-formyltetrahydrofolate = N-formyl-L-methionyl-tRNA(fMet) + (6S)-5,6,7,8-tetrahydrofolate + H(+). In terms of biological role, attaches a formyl group to the free amino group of methionyl-tRNA(fMet). The formyl group appears to play a dual role in the initiator identity of N-formylmethionyl-tRNA by promoting its recognition by IF2 and preventing the misappropriation of this tRNA by the elongation apparatus. The polypeptide is Methionyl-tRNA formyltransferase (Rhodopseudomonas palustris (strain TIE-1)).